Reading from the N-terminus, the 463-residue chain is Golgi-associated PDZ and coiled-coil motif-containing protein (463 aa).

Serine 2 carries the post-translational modification N-acetylserine. The stretch at 85-201 forms a coiled coil; it reads AQTVSQINHK…RHIAVLQAEV (117 aa). A PDZ domain is found at 289-372; that stretch reads KVLLLKEDHE…EIEFEVVYVA (84 aa). 2 positions are modified to phosphoserine: serine 402 and serine 405.

Homooligomer. Interacts with FZD5. Interacts with FZD8. Interacts with GRID2 and BECN1. Interacts with CSPG5. Interacts with CLCN3. Interacts with STX6. Interacts with CFTR. Interacts with ASIC3. Interacts with GOLGA3. Interacts with NLGN1. Interacts with RHOQ. Interacts with MARCHF2; the interaction leads to CFTR ubiquitination and degradation. May interact with CACNG2. Interacts with CCDC62. In terms of tissue distribution, ubiquitously expressed (at protein level). Expressed in dorsal root glanglion (DRG), spinal cord and brain. Isoform 1 is preferentially expressed in whole brain (at protein level) and cerebellum. Expressed in spermatocytes and spermatides but not in Sertoli cells and spermatogonia.

The protein resides in the cytoplasm. It localises to the golgi apparatus membrane. It is found in the golgi apparatus. Its subcellular location is the trans-Golgi network membrane. The protein localises to the synapse. The protein resides in the postsynaptic density. It localises to the cell projection. It is found in the dendrite. Plays a role in intracellular protein trafficking and degradation. May regulate CFTR chloride currents and acid-induced ASIC3 currents by modulating cell surface expression of both channels. May also regulate the intracellular trafficking of the ADR1B receptor. May play a role in autophagy. Together with MARCHF2 mediates the ubiquitination and lysosomal degradation of CFTR. Overexpression results in CFTR intracellular retention and degradation in the lysosomes. The polypeptide is Golgi-associated PDZ and coiled-coil motif-containing protein (Mus musculus (Mouse)).